Here is a 475-residue protein sequence, read N- to C-terminus: Ataxin-10 (475 aa).

Arginine 10 is subject to Omega-N-methylarginine. Phosphoserine is present on residues serine 12 and serine 77. Threonine 82 is subject to Phosphothreonine. Serine 430 carries the post-translational modification Phosphoserine.

This sequence belongs to the ataxin-10 family. Homooligomer. Interacts with GNB2. Interacts with IQCB1. Interacts with OGT. In terms of processing, polyubiquitinated. Phosphorylation at Ser-12 by AURKB promotes the association of ATXN10 with PLK1. Phosphorylation at Ser-77 and Thr-82 by PLK1 may play a role in the regulation of cytokinesis and may stimulate the proteasome-mediated degradation of ATXN10. In terms of tissue distribution, ubiquitous distribution. Markedly increased expression in testis, adrenals, and brain.

It localises to the cytoplasm. It is found in the perinuclear region. The protein resides in the midbody. Its subcellular location is the cytoskeleton. The protein localises to the cilium basal body. It localises to the microtubule organizing center. It is found in the centrosome. The protein resides in the centriole. In terms of biological role, may play a role in the regulation of cytokinesis. May play a role in signaling by stimulating protein glycosylation. Induces neuritogenesis by activating the Ras-MAP kinase pathway and is necessary for the survival of cerebellar neurons. Does not appear to play a major role in ciliogenesis. This is Ataxin-10 (Atxn10) from Rattus norvegicus (Rat).